We begin with the raw amino-acid sequence, 250 residues long: Proteasome subunit alpha type-4-2 (250 aa).

In terms of assembly, the 26S proteasome consists of a 20S proteasome core and two 19S regulatory subunits. The 20S proteasome core is composed of 28 subunits that are arranged in four stacked rings, resulting in a barrel-shaped structure. The two end rings are each formed by seven alpha subunits, and the two central rings are each formed by seven beta subunits. The catalytic chamber with the active sites is on the inside of the barrel.

The protein localises to the cytoplasm. It is found in the nucleus. Functionally, the proteasome is a multicatalytic proteinase complex which is characterized by its ability to cleave peptides with Arg, Phe, Tyr, Leu, and Glu adjacent to the leaving group at neutral or slightly basic pH. The proteasome has an ATP-dependent proteolytic activity. In Oryza sativa subsp. indica (Rice), this protein is Proteasome subunit alpha type-4-2.